The sequence spans 159 residues: Aphid transmission protein (159 aa).

This sequence belongs to the caulimoviridae ORF II family.

Its function is as follows. This protein is involved in virus transmission. In Cauliflower mosaic virus (strain BBC) (CaMV), this protein is Aphid transmission protein.